Consider the following 244-residue polypeptide: MEIKDEETTAEVAMVVQSRFRRVCVFCGSSHGKKKIYQDAAIELGKELVARNIDLVYGGGSVGLMGLVSQAVHNGGRHVIGVIPKTLMPREISGETVGEVKAVSDMHQRKAEMARQSDAFIALPGGYGTLEELLEVIAWAQLGIHDKPVGLLNVDGYYNPLLSFIDKAVEEGFIRPSARHIIVLAPTPKELIEKLEEYSPQHEKVVSKMKWEMEQMSYPQNYDIPRPKEGKMIIEAQRGSRLWM.

Residues E91, R109 to K110, and G126 to E132 contribute to the substrate site.

This sequence belongs to the LOG family.

The catalysed reaction is N(6)-(dimethylallyl)adenosine 5'-phosphate + H2O = N(6)-dimethylallyladenine + D-ribose 5-phosphate. It carries out the reaction 9-ribosyl-trans-zeatin 5'-phosphate + H2O = trans-zeatin + D-ribose 5-phosphate. Cytokinin-activating enzyme working in the direct activation pathway. Phosphoribohydrolase that converts inactive cytokinin nucleotides to the biologically active free-base forms. This is Probable cytokinin riboside 5'-monophosphate phosphoribohydrolase LOGL2 (LOGL2) from Oryza sativa subsp. japonica (Rice).